A 1028-amino-acid chain; its full sequence is RNA cytidine acetyltransferase 2 (1028 aa).

ATP is bound by residues 286–295 (GRGKSAALGL) and arginine 458. Positions 546-729 (VLLGPVDESQ…FAPFYVSQIP (184 aa)) constitute an N-acetyltransferase domain. Residues 617 to 619 (IAV), 624 to 630 (MKMGYGS), and lysine 717 each bind acetyl-CoA. The segment at 982 to 1028 (SGIISVKSTKSENENGFDKSTKKRSSDKRSSSSSKSKSSKKRKSLKE) is disordered. Over residues 990–1001 (TKSENENGFDKS) the composition is skewed to basic and acidic residues. Basic residues predominate over residues 1018 to 1028 (KSSKKRKSLKE).

It belongs to the RNA cytidine acetyltransferase family. NAT10 subfamily.

It localises to the nucleus. The protein localises to the nucleolus. It carries out the reaction a cytidine in 18S rRNA + acetyl-CoA + ATP + H2O = an N(4)-acetylcytidine in 18S rRNA + ADP + phosphate + CoA + H(+). It catalyses the reaction a cytidine in tRNA + acetyl-CoA + ATP + H2O = an N(4)-acetylcytidine in tRNA + ADP + phosphate + CoA + H(+). Its function is as follows. RNA cytidine acetyltransferase with specificity toward both 18S rRNA and tRNAs. Catalyzes the formation of N(4)-acetylcytidine (ac4C) in 18S rRNA. Required for early nucleolar cleavages of precursor rRNA at sites A0, A1 and A2 during 18S rRNA synthesis. Catalyzes the formation of ac4C in serine and leucine tRNAs. Requires a tRNA-binding adapter protein for full tRNA acetyltransferase activity but not for 18S rRNA acetylation. This Arabidopsis thaliana (Mouse-ear cress) protein is RNA cytidine acetyltransferase 2.